Here is a 409-residue protein sequence, read N- to C-terminus: Putative competence-damage inducible protein (409 aa).

This sequence belongs to the CinA family.

This chain is Putative competence-damage inducible protein, found in Clostridium tetani (strain Massachusetts / E88).